We begin with the raw amino-acid sequence, 250 residues long: Exotoxin type A (250 aa).

An N-terminal signal peptide occupies residues 1 to 30 (MENNKEVLKKMVFFVLMKFLGLTILPKGIC). Cys-117 and Cys-128 are disulfide-bonded.

The protein belongs to the staphylococcal/streptococcal toxin family.

Causative agent of the symptoms associated with scarlet fever, have been associated with streptococcal toxic shock-like disease and may play a role in the early events of rheumatic fever. The sequence is that of Exotoxin type A (speA) from Streptococcus pyogenes.